Here is a 66-residue protein sequence, read N- to C-terminus: Alpha-conotoxin RegIIA (66 aa).

Residues 1 to 21 (MGMRMMFTVFLLVVLTTTVVS) form the signal peptide. A propeptide spanning residues 22 to 49 (STSVRASDGRNAAADNRASDLIAQIVRR) is cleaved from the precursor. 2 cysteine pairs are disulfide-bonded: Cys-51–Cys-57 and Cys-52–Cys-65. A ser-Xaa-Pro motif, crucial for potent interaction with nAChR region spans residues 53–55 (SHP). At Cys-65 the chain carries Cysteine amide.

The protein belongs to the conotoxin A superfamily. As to expression, expressed by the venom duct.

It is found in the secreted. Functionally, alpha-conotoxins act on postsynaptic membranes, they bind to the nicotinic acetylcholine receptors (nAChR) and thus inhibit them. This toxin potently inhibits alpha-3 containing subunit nAChR. It inhibits alpha-3-beta-2/CHRNA3-CHRNB2 (IC(50)=10.7-33 nM (rat)/132.4-704.1 nM (human)) and alpha-3-beta-4/CHRNA3-CHRNB4 (IC(50)=47.3-97 nM (rat)/52.1 nM (human)). It also inhibits alpha-7/CHRNA7 nAChR with IC(50)=103-210 nM (human)/41-61.2 nM (rat) nAChRs. It is more potent on alpha-3-beta-2 receptors in human than in rat, due to a variation (Pro vs Gln) in alpha-3 subunit in these orthologs. Conversely, does not show species-specific differences in sensitivity at the alpha-3-beta-4 receptor. In Conus regius (Crown cone), this protein is Alpha-conotoxin RegIIA.